The following is a 172-amino-acid chain: Protein CapG (172 aa).

The protein belongs to the transferase hexapeptide repeat family.

The protein operates within capsule biogenesis; capsule polysaccharide biosynthesis. Its function is as follows. Required for the biosynthesis of type 1 capsular polysaccharide. The polypeptide is Protein CapG (capG) (Staphylococcus aureus).